A 631-amino-acid polypeptide reads, in one-letter code: MNLFTRISSRTKKANLYYVTLVALLCIASYLLGIWQNTAVNPRAAFDDSDGTPCEGFTRPNSTKDLDFDAHHNIQDPPPVTETAVSFPSCAAALSEHTPCEDAKRSLKFSRERLEYRQRHCPEREEILKCRIPAPYGYKTPFRWPASRDVAWFANVPHTELTVEKKNQNWVRYENDRFWFPGGGTMFPRGADAYIDDIGRLIDLSDGSIRTAIDTGCGVASFGAYLLSRNITTMSFAPRDTHEAQVQFALERGVPAMIGIMATIRLPYPSRAFDLAHCSRCLIPWGQNDGAYLMEVDRVLRPGGYWILSGPPINWQKRWKGWERTMDDLNAEQTQIEQVARSLCWKKVVQRDDLAIWQKPFNHIDCKKTREVLKNPEFCRHDQDPDMAWYTKMDSCLTPLPEVDDAEDLKTVAGGKVEKWPARLNAIPPRVNKGALEEITPEAFLENTKLWKQRVSYYKKLDYQLGETGRYRNLVDMNAYLGGFAAALADDPVWVMNVVPVEAKLNTLGVIYERGLIGTYQNWCEAMSTYPRTYDFIHADSVFTLYQGQCEPEEILLEMDRILRPGGGVIIRDDVDVLIKVKELTKGLEWEGRIADHEKGPHEREKIYYAVKQYWTVPAPDEDKNNTSALS.

At 1-14 (MNLFTRISSRTKKA) the chain is on the cytoplasmic side. The helical; Signal-anchor for type II membrane protein transmembrane segment at 15-35 (NLYYVTLVALLCIASYLLGIW) threads the bilayer. Residues 36-631 (QNTAVNPRAA…EDKNNTSALS (596 aa)) lie on the Lumenal side of the membrane. 3 N-linked (GlcNAc...) asparagine glycosylation sites follow: asparagine 61, asparagine 230, and asparagine 626.

Belongs to the methyltransferase superfamily.

The protein resides in the endoplasmic reticulum membrane. This is Probable methyltransferase PMT16 from Arabidopsis thaliana (Mouse-ear cress).